Here is a 388-residue protein sequence, read N- to C-terminus: (S)-8-oxocitronellyl enol synthase (388 aa).

NADP(+) is bound by residues 38–40, 66–67, 84–85, 108–109, and glutamine 142; these read TGI, RR, DV, and SW. Active-site residues include lysine 146 and tyrosine 178. Residues lysine 146 and tyrosine 178 each coordinate substrate. NADP(+)-binding positions include tyrosine 178, valine 204, and 211 to 213; that span reads SMM. Serine 349 is a substrate binding site.

Belongs to the short-chain dehydrogenases/reductases (SDR) family. Highly divergent. Homodimer. As to expression, expressed in internal phloem-associated parenchyma (IPAP) cells.

The protein localises to the cytoplasm. It is found in the cytosol. The enzyme catalyses (S)-8-oxocitronellyl enol + NADP(+) = (6E)-8-oxogeranial + NADPH + H(+). The catalysed reaction is (S)-8-oxocitronellyl enol + NAD(+) = (6E)-8-oxogeranial + NADH + H(+). Its function is as follows. Iridoid synthase that catalyzes the first step in generation of the iridoid ring scaffold using the linear monoterpene (6E)-8-oxogeranial as substrate. Iridoids comprise a large family of distinctive bicyclic monoterpenes that possess a wide range of pharmacological activities, including anticancer, anti-inflammatory, antifungal and antibacterial activities. The polypeptide is (S)-8-oxocitronellyl enol synthase (Catharanthus roseus (Madagascar periwinkle)).